A 341-amino-acid polypeptide reads, in one-letter code: Foldase protein PrsA (341 aa).

Residues methionine 1–glycine 22 form the signal peptide. Cysteine 23 is lipidated: N-palmitoyl cysteine. Cysteine 23 is lipidated: S-diacylglycerol cysteine. The 93-residue stretch at proline 199–lysine 291 folds into the PpiC domain.

It belongs to the PrsA family.

It is found in the cell membrane. The catalysed reaction is [protein]-peptidylproline (omega=180) = [protein]-peptidylproline (omega=0). Functionally, plays a major role in protein secretion by helping the post-translocational extracellular folding of several secreted proteins. The polypeptide is Foldase protein PrsA (Clostridium kluyveri (strain NBRC 12016)).